The sequence spans 455 residues: ATP-dependent protease ATPase subunit HslU (455 aa).

ATP contacts are provided by residues Ile19, 61 to 66 (GVGKTE), Asp268, Glu333, and Arg405.

It belongs to the ClpX chaperone family. HslU subfamily. As to quaternary structure, a double ring-shaped homohexamer of HslV is capped on each side by a ring-shaped HslU homohexamer. The assembly of the HslU/HslV complex is dependent on binding of ATP.

The protein localises to the cytoplasm. ATPase subunit of a proteasome-like degradation complex; this subunit has chaperone activity. The binding of ATP and its subsequent hydrolysis by HslU are essential for unfolding of protein substrates subsequently hydrolyzed by HslV. HslU recognizes the N-terminal part of its protein substrates and unfolds these before they are guided to HslV for hydrolysis. The sequence is that of ATP-dependent protease ATPase subunit HslU from Francisella philomiragia subsp. philomiragia (strain ATCC 25017 / CCUG 19701 / FSC 153 / O#319-036).